The sequence spans 372 residues: Putative glutamate--cysteine ligase 2 (372 aa).

This sequence belongs to the glutamate--cysteine ligase type 2 family. YbdK subfamily. In terms of assembly, homodimer.

The catalysed reaction is L-cysteine + L-glutamate + ATP = gamma-L-glutamyl-L-cysteine + ADP + phosphate + H(+). ATP-dependent carboxylate-amine ligase which exhibits weak glutamate--cysteine ligase activity. The protein is Putative glutamate--cysteine ligase 2 (ybdK) of Escherichia coli O8 (strain IAI1).